We begin with the raw amino-acid sequence, 170 residues long: Small ribosomal subunit protein uS9 (170 aa).

Residues M1–G47 are disordered.

Belongs to the universal ribosomal protein uS9 family.

The polypeptide is Small ribosomal subunit protein uS9 (rpsI) (Streptomyces coelicolor (strain ATCC BAA-471 / A3(2) / M145)).